A 263-amino-acid polypeptide reads, in one-letter code: Cell division protein DivIB (263 aa).

At 1 to 32 (MNPGQDREKIVNIEERIPKIKEQRKQKANRRL) the chain is on the cytoplasmic side. Residues 33-53 (ISFIMLFFIMVLIIVYLQTPI) traverse the membrane as a helical segment. Residues 51-123 (TPISKVSTIS…NKINIAIEEY (73 aa)) are alpha. A POTRA domain is found at 54–123 (SKVSTISVTG…NKINIAIEEY (70 aa)). At 54–263 (SKVSTISVTG…DKAAKKEDEN (210 aa)) the chain is on the extracellular side. The beta stretch occupies residues 124–251 (KAIAYLEKDD…EVATYFEEFG (128 aa)). The gamma stretch occupies residues 229 to 263 (SQLSSNKKGIIHLEVATYFEEFGKNDKAAKKEDEN).

This sequence belongs to the FtsQ/DivIB family. DivIB subfamily. As to quaternary structure, interacts with FtsL, DivIC and PBP-2B.

Its subcellular location is the cell membrane. Its function is as follows. Cell division protein that may be involved in stabilizing or promoting the assembly of the division complex. Plays an essential role in division at high temperatures, maybe by protecting FtsL from degradation or by promoting formation of the FtsL-DivIC complex. May modulate the transpeptidase activity of PBP-2B. Also required for efficient sporulation at all temperatures. Could be directly involved in the engulfment process or be required to form a sporulation septum competent for engulfment. Influences the Spo0J/Soj system of chromosome segregation. The protein is Cell division protein DivIB of Bacillus subtilis (strain 168).